Here is a 162-residue protein sequence, read N- to C-terminus: Putative auxin-responsive protein IAA28 (162 aa).

The 96-residue stretch at 23–118 (SRFVKVFMHG…TVKRIYIVPA (96 aa)) folds into the PB1 domain. A disordered region spans residues 122–141 (NESEYQEEEEDNAAAAATAD).

It belongs to the Aux/IAA family. As to quaternary structure, homodimers and heterodimers.

The protein resides in the nucleus. In terms of biological role, aux/IAA proteins are short-lived transcriptional factors that function as repressors of early auxin response genes at low auxin concentrations. In Oryza sativa subsp. japonica (Rice), this protein is Putative auxin-responsive protein IAA28 (IAA28).